A 387-amino-acid chain; its full sequence is Arrestin-C (387 aa).

It belongs to the arrestin family. In terms of tissue distribution, retina and pineal gland.

In terms of biological role, may play a role in an as yet undefined retina-specific signal transduction. Could bind to photoactivated-phosphorylated red/green opsins. This Xenopus laevis (African clawed frog) protein is Arrestin-C (arr3).